The following is a 254-amino-acid chain: Triosephosphate isomerase (254 aa).

9–11 (NWK) lines the substrate pocket. Histidine 95 (electrophile) is an active-site residue. Glutamate 167 functions as the Proton acceptor in the catalytic mechanism. Residues glycine 173, serine 213, and 234 to 235 (GG) contribute to the substrate site.

The protein belongs to the triosephosphate isomerase family. Homodimer.

It is found in the cytoplasm. The enzyme catalyses D-glyceraldehyde 3-phosphate = dihydroxyacetone phosphate. It functions in the pathway carbohydrate biosynthesis; gluconeogenesis. It participates in carbohydrate degradation; glycolysis; D-glyceraldehyde 3-phosphate from glycerone phosphate: step 1/1. Involved in the gluconeogenesis. Catalyzes stereospecifically the conversion of dihydroxyacetone phosphate (DHAP) to D-glyceraldehyde-3-phosphate (G3P). In Roseiflexus sp. (strain RS-1), this protein is Triosephosphate isomerase.